We begin with the raw amino-acid sequence, 450 residues long: Chromosomal replication initiator protein DnaA (450 aa).

Residues 1 to 69 are domain I, interacts with DnaA modulators; that stretch reads MHDVWRQATE…VGALSVTAGK (69 aa). The domain II stretch occupies residues 69 to 113; it reads KKYFIELVVQEEDQNAEVPQAEDLIIKGHQEIEQPVTSQPETSSS. Positions 114-330 are domain III, AAA+ region; it reads SLNPKYTFEL…GMLIRLGAYS (217 aa). Positions 158, 160, 161, and 162 each coordinate ATP. Positions 331–450 are domain IV, binds dsDNA; the sequence is SLQGIPITLD…IEDIKLILLK (120 aa).

The protein belongs to the DnaA family. As to quaternary structure, oligomerizes as a right-handed, spiral filament on DNA at oriC.

Its subcellular location is the cytoplasm. Its function is as follows. Plays an essential role in the initiation and regulation of chromosomal replication. ATP-DnaA binds to the origin of replication (oriC) to initiate formation of the DNA replication initiation complex once per cell cycle. Binds the DnaA box (a 9 base pair repeat at the origin) and separates the double-stranded (ds)DNA. Forms a right-handed helical filament on oriC DNA; dsDNA binds to the exterior of the filament while single-stranded (ss)DNA is stabiized in the filament's interior. The ATP-DnaA-oriC complex binds and stabilizes one strand of the AT-rich DNA unwinding element (DUE), permitting loading of DNA polymerase. After initiation quickly degrades to an ADP-DnaA complex that is not apt for DNA replication. Binds acidic phospholipids. The protein is Chromosomal replication initiator protein DnaA of Pelobacter propionicus (strain DSM 2379 / NBRC 103807 / OttBd1).